A 221-amino-acid chain; its full sequence is Uracil-DNA glycosylase (221 aa).

Asp-63 serves as the catalytic Proton acceptor.

This sequence belongs to the uracil-DNA glycosylase (UDG) superfamily. UNG family.

It is found in the cytoplasm. It carries out the reaction Hydrolyzes single-stranded DNA or mismatched double-stranded DNA and polynucleotides, releasing free uracil.. Its function is as follows. Excises uracil residues from the DNA which can arise as a result of misincorporation of dUMP residues by DNA polymerase or due to deamination of cytosine. In Blochmanniella floridana, this protein is Uracil-DNA glycosylase.